Consider the following 474-residue polypeptide: tRNA-2-methylthio-N(6)-dimethylallyladenosine synthase (474 aa).

An MTTase N-terminal domain is found at 3–120 (QKLHIKTWGC…LPEMINQIRA (118 aa)). [4Fe-4S] cluster contacts are provided by Cys-12, Cys-49, Cys-83, Cys-157, Cys-161, and Cys-164. One can recognise a Radical SAM core domain in the interval 143–375 (KAEGPTAFVS…QQRINNQAAQ (233 aa)). Residues 378-441 (RAMLGTEQRV…TNSLRGDVVR (64 aa)) form the TRAM domain.

It belongs to the methylthiotransferase family. MiaB subfamily. In terms of assembly, monomer. [4Fe-4S] cluster serves as cofactor.

The protein resides in the cytoplasm. The catalysed reaction is N(6)-dimethylallyladenosine(37) in tRNA + (sulfur carrier)-SH + AH2 + 2 S-adenosyl-L-methionine = 2-methylsulfanyl-N(6)-dimethylallyladenosine(37) in tRNA + (sulfur carrier)-H + 5'-deoxyadenosine + L-methionine + A + S-adenosyl-L-homocysteine + 2 H(+). In terms of biological role, catalyzes the methylthiolation of N6-(dimethylallyl)adenosine (i(6)A), leading to the formation of 2-methylthio-N6-(dimethylallyl)adenosine (ms(2)i(6)A) at position 37 in tRNAs that read codons beginning with uridine. The polypeptide is tRNA-2-methylthio-N(6)-dimethylallyladenosine synthase (Mannheimia succiniciproducens (strain KCTC 0769BP / MBEL55E)).